Here is a 327-residue protein sequence, read N- to C-terminus: Malate dehydrogenase (327 aa).

11-17 serves as a coordination point for NAD(+); it reads GAAGQIS. Residues R92 and R98 each coordinate substrate. NAD(+)-binding positions include N105, Q112, and 129-131; that span reads VGN. Substrate-binding residues include N131 and R162. H187 acts as the Proton acceptor in catalysis.

The protein belongs to the LDH/MDH superfamily. MDH type 2 family.

It catalyses the reaction (S)-malate + NAD(+) = oxaloacetate + NADH + H(+). Its function is as follows. Catalyzes the reversible oxidation of malate to oxaloacetate. The protein is Malate dehydrogenase of Teredinibacter turnerae (strain ATCC 39867 / T7901).